Consider the following 307-residue polypeptide: Protein Y (307 aa).

This sequence belongs to the ATP-dependent AMP-binding enzyme family.

Its pathway is antibiotic biosynthesis; candicidin biosynthesis. May be a p-aminobenzoic acid-CoA ligase that activates PabA to start the biosynthesis of candicidin. The polypeptide is Protein Y (Streptomyces griseus).